Reading from the N-terminus, the 250-residue chain is UPF0736 protein RBAM_011410 (250 aa).

The protein belongs to the UPF0736 family.

The protein is UPF0736 protein RBAM_011410 of Bacillus velezensis (strain DSM 23117 / BGSC 10A6 / LMG 26770 / FZB42) (Bacillus amyloliquefaciens subsp. plantarum).